Reading from the N-terminus, the 92-residue chain is Putative pterin-4-alpha-carbinolamine dehydratase (92 aa).

The protein belongs to the pterin-4-alpha-carbinolamine dehydratase family.

The catalysed reaction is (4aS,6R)-4a-hydroxy-L-erythro-5,6,7,8-tetrahydrobiopterin = (6R)-L-erythro-6,7-dihydrobiopterin + H2O. The sequence is that of Putative pterin-4-alpha-carbinolamine dehydratase from Acidobacterium capsulatum (strain ATCC 51196 / DSM 11244 / BCRC 80197 / JCM 7670 / NBRC 15755 / NCIMB 13165 / 161).